Reading from the N-terminus, the 644-residue chain is Arabinosyltransferase XEG113 (644 aa).

Residues 1–17 (MVEGWRNGFRDATNSKP) are Cytoplasmic-facing. Residues 18–38 (LFVTIYATVIIGVLVSSFYVF) traverse the membrane as a helical; Signal-anchor for type II membrane protein segment. Residues 39–644 (SAIYSPTNGS…QTPEEDHPPL (606 aa)) are Lumenal-facing. N-linked (GlcNAc...) asparagine glycans are attached at residues Asn-46 and Asn-70. The DXD motif signature appears at 226-228 (DTD). N-linked (GlcNAc...) asparagine glycosylation is found at Asn-446 and Asn-542.

The protein belongs to the glycosyltransferase 77 family.

Its subcellular location is the golgi apparatus membrane. In terms of biological role, plays a role in the arabinosylation of cell wall components. Involved in the arabinosylation of extensin proteins in root hair cells. Extensins are structural glycoproteins present in cell walls and its arabinosylation is important for cell elongation, root hair cell development, lateral root development and root hair tip growth. The protein is Arabinosyltransferase XEG113 of Arabidopsis thaliana (Mouse-ear cress).